A 128-amino-acid chain; its full sequence is Gastrotropin (128 aa).

A2 bears the N-acetylalanine mark.

This sequence belongs to the calycin superfamily. Fatty-acid binding protein (FABP) family. As to expression, expressed in ovary granulosa and luteal cells.

It localises to the cytoplasm. The protein resides in the membrane. Binds to bile acids and is involved in enterohepatic bile acid metabolism. Required for efficient apical to basolateral transport of conjugated bile acids in ileal enterocytes. Stimulates gastric acid and pepsinogen secretion. In Mus musculus (Mouse), this protein is Gastrotropin (Fabp6).